A 1295-amino-acid polypeptide reads, in one-letter code: Phosphoribosylformylglycinamidine synthase (1295 aa).

A disordered region spans residues 305 to 327 (WPGAATGSGGEIRDEGATGRGAK). Residues 307–318 (GAATGSGGEIRD) and Ala678 contribute to the ATP site. Residues Glu718, Asn722, and Asp884 each contribute to the Mg(2+) site. ATP is bound at residue Ser886. The 254-residue stretch at 1042 to 1295 (VAVLREQGVN…IFRNARKQLG (254 aa)) folds into the Glutamine amidotransferase type-1 domain. Cys1135 serves as the catalytic Nucleophile. Residues His1260 and Glu1262 contribute to the active site.

In the N-terminal section; belongs to the FGAMS family. In terms of assembly, monomer.

The protein resides in the cytoplasm. The catalysed reaction is N(2)-formyl-N(1)-(5-phospho-beta-D-ribosyl)glycinamide + L-glutamine + ATP + H2O = 2-formamido-N(1)-(5-O-phospho-beta-D-ribosyl)acetamidine + L-glutamate + ADP + phosphate + H(+). Its pathway is purine metabolism; IMP biosynthesis via de novo pathway; 5-amino-1-(5-phospho-D-ribosyl)imidazole from N(2)-formyl-N(1)-(5-phospho-D-ribosyl)glycinamide: step 1/2. Its function is as follows. Phosphoribosylformylglycinamidine synthase involved in the purines biosynthetic pathway. Catalyzes the ATP-dependent conversion of formylglycinamide ribonucleotide (FGAR) and glutamine to yield formylglycinamidine ribonucleotide (FGAM) and glutamate. The chain is Phosphoribosylformylglycinamidine synthase from Escherichia coli O6:K15:H31 (strain 536 / UPEC).